Consider the following 463-residue polypeptide: MLSENVKKISMVEKVGYASGDFACNLIYATVSTYLLFFYTDVFGLSAAAAGTMFLVVRIIDALADPFIGTIVDRTNSRFGRFRPYLLFGAFPFVILAILCFTTPDFSDMGKLIYAYITYVGLSLTYTTINVPYGALTSAMTRNNQEVVSITSVRMLFANLGGLVVAFFVPLLAAYLSDTSGNESLGWQLTMGILGMIGGCLLIFCFKSTKERVTLQKSEEKIKFTDIFEQFRVNRPLVVLSIFFIIIFGVNSISNSVGIYYVTYNLEREDLVKWYGLIGSLPALVILPFIPRLHQFLGKKKLLNYALLLNIIGLLALLFVPPSNVYLILVCRLIAAAGSLTAGGYMWALIPETIEYGEYRTGKRMGGLIYAIIGFFFKFGMALGGVVPGLVLDKFGYVANQAQTPAALMGILITTTIIPVFLLVLALIDINFYNLDEKKYKNMVRELENRDKVYLDHIDDFKA.

12 helical membrane-spanning segments follow: residues 21–40 (DFACNLIYATVSTYLLFFYT), 50–72 (AGTMFLVVRIIDALADPFIGTIV), 84–104 (PYLLFGAFPFVILAILCFTTP), 112–132 (LIYAYITYVGLSLTYTTINVP), 156–176 (LFANLGGLVVAFFVPLLAAYL), 186–206 (GWQLTMGILGMIGGCLLIFCF), 237–257 (LVVLSIFFIIIFGVNSISNSV), 271–291 (LVKWYGLIGSLPALVILPFIP), 311–331 (IIGLLALLFVPPSNVYLILVC), 334–354 (IAAAGSLTAGGYMWALIPETI), 367–387 (GLIYAIIGFFFKFGMALGGVV), and 408–428 (LMGILITTTIIPVFLLVLALI).

It belongs to the sodium:galactoside symporter (TC 2.A.2) family.

Its subcellular location is the cell membrane. This is an uncharacterized protein from Bacillus subtilis (strain 168).